Reading from the N-terminus, the 113-residue chain is Protein FAM27E3 (113 aa).

Residues Met-1–Leu-113 are disordered. Residues Gln-77 to Arg-99 are compositionally biased toward basic and acidic residues. Over residues His-100 to Leu-113 the composition is skewed to basic residues.

It belongs to the FAM27 family.

The protein is Protein FAM27E3 (FAM27E3) of Homo sapiens (Human).